The chain runs to 89 residues: Small ribosomal subunit protein uS15 (89 aa).

Belongs to the universal ribosomal protein uS15 family. In terms of assembly, part of the 30S ribosomal subunit. Forms a bridge to the 50S subunit in the 70S ribosome, contacting the 23S rRNA.

One of the primary rRNA binding proteins, it binds directly to 16S rRNA where it helps nucleate assembly of the platform of the 30S subunit by binding and bridging several RNA helices of the 16S rRNA. Its function is as follows. Forms an intersubunit bridge (bridge B4) with the 23S rRNA of the 50S subunit in the ribosome. The sequence is that of Small ribosomal subunit protein uS15 from Cellvibrio japonicus (strain Ueda107) (Pseudomonas fluorescens subsp. cellulosa).